Reading from the N-terminus, the 467-residue chain is Thiohydroximate-O-sulfate sulfur/sulfate-lyase (nitrile-forming) NSP3 (467 aa).

Positions 2-143 constitute a Jacalin-type lectin domain; it reads AQKLVAQGGE…LHSLGAYVSL (142 aa). 5 Kelch repeats span residues 177 to 225, 230 to 276, 280 to 329, 331 to 375, and 379 to 434; these read KIYS…VRMV, TLYT…SMAA, NVYV…VVQG, VWIV…ASAA, and HIVI…ASTT. The active-site Proton donor is the Arg-237. The a (Z)-N-(sulfonatooxy)alkanimidothioate site is built by Arg-237, Ser-270, Arg-292, Gly-321, and Val-370. Residue Arg-292 is the Proton donor of the active site. Fe(2+)-binding residues include Glu-386, Asp-390, and His-394. Trp-429 lines the a (Z)-N-(sulfonatooxy)alkanimidothioate pocket.

Belongs to the jacalin lectin family. Fe(2+) serves as cofactor. As to expression, mainly expressed in roots, and, at low levels, in seedlings and leaves. Observed in seeds.

The enzyme catalyses a (Z)-N-(sulfonatooxy)alkanimidothioate = a nitrile + sulfur + sulfate. It carries out the reaction (Z)-phenyl-N-(sulfonatooxy)methanimidothioate = phenylacetonitrile + sulfur + sulfate. The catalysed reaction is (Z)-N-(sulfonatooxy)prop-2-enimidothioate = but-3-enenitrile + sulfur + sulfate. Its function is as follows. Specifier protein responsible for constitutive and herbivore-induced simple nitrile formation, especially in roots. Promotes simple nitriles, but not epithionitrile or thiocyanate formation. Converts allylglucosinolate and benzylglucosinolate (glucotropaeolin) to their corresponding simple nitriles in the presence of myrosinase. The protein is Thiohydroximate-O-sulfate sulfur/sulfate-lyase (nitrile-forming) NSP3 of Arabidopsis thaliana (Mouse-ear cress).